The following is a 248-amino-acid chain: MEGAEEKKKKVPAVPETLKKKRKNFAELKIKRLRKKFAQKMLRKARRKLIYEKAKHYHKEYRQMYRTEIRMARMARKAGNFYVPAEPKLAFVIRIRGINGVSPKVRKVLQLLRLRQIFNGTFVKLNKASINMLRIVEPYIAWGYPNLKSVNELIYKRGYGKINKKRIALTDNALIARSLGKYGIICMEDLIHEIYTVGKRFKEANNFLWPFKLSSPRGGMKKKTTHFVEGGDAGNREDQINRLIRRMN.

Position 1 is an N-acetylmethionine (methionine 1). Repeat copies occupy residues 7 to 18, 19 to 30, 31 to 42, and 43 to 54. A 4 X 12 AA tandem repeats region spans residues 7 to 54; that stretch reads KKKKVPAVPETLKKKRKNFAELKIKRLRKKFAQKMLRKARRKLIYEKA. Threonine 17 is modified (phosphothreonine). An N6-acetyllysine modification is found at lysine 124. The residue at position 127 (lysine 127) is an N6-succinyllysine. Tyrosine 139 bears the Phosphotyrosine mark.

It belongs to the universal ribosomal protein uL30 family. Component of the large ribosomal subunit. Homodimer. Interacts with DHX33.

The protein localises to the cytoplasm. In terms of biological role, component of the large ribosomal subunit. The ribosome is a large ribonucleoprotein complex responsible for the synthesis of proteins in the cell. Binds to G-rich structures in 28S rRNA and in mRNAs. Plays a regulatory role in the translation apparatus; inhibits cell-free translation of mRNAs. This is Large ribosomal subunit protein uL30 (RPL7) from Bos taurus (Bovine).